The sequence spans 518 residues: G-protein coupled receptor 161 (518 aa).

Topologically, residues 1–26 (MNSSSDGANEGAGAAADNGPTKVAES) are extracellular. The N-linked (GlcNAc...) asparagine glycan is linked to asparagine 2. A helical transmembrane segment spans residues 27–47 (IAIIIIDILICLGNLVIVVTL). Topologically, residues 48–59 (YKKSYLLSLSNK) are cytoplasmic. A helical transmembrane segment spans residues 60-80 (FVFSLTFSNLLLSMLVLPFVV). Over 81-97 (VSSILREWIFGVVWCNF) the chain is Extracellular. Cysteines 95 and 173 form a disulfide. The N-linked (GlcNAc...) asparagine glycan is linked to asparagine 96. Residues 98–118 (SALLYMLISSASMLTLGIIAI) traverse the membrane as a helical segment. At 119–138 (DRYYAVLYPMVYPMKITGNR) the chain is on the cytoplasmic side. The chain crosses the membrane as a helical span at residues 139 to 159 (AVLALVYVWLHSLIGCLPPLF). Topologically, residues 160 to 185 (GWSTLEFDHFKWMCVAAWHKEAGYTA) are extracellular. The helical transmembrane segment at 186–206 (FWQVWCALLPFIVMMICYGFI) threads the bilayer. Residues 207-264 (FRVARIKARKIHCGTVIIVQEASQKNGRKNSSTSTSSSGSRKNGFSSIVYSANQCKAL) are Cytoplasmic-facing. The helical transmembrane segment at 265 to 285 (ITILVVIGAFVLTWGPYMIVI) threads the bilayer. The Extracellular segment spans residues 286–301 (STEALKGKNSVSPVLE). Residues 302–322 (TLATWLSFTSAICHPLIYGLW) traverse the membrane as a helical segment. Topologically, residues 323 to 518 (NKTVRKELLG…GNIETSKCDV (196 aa)) are cytoplasmic. Residues 429–448 (EVEQKNDARTMPTQPTAPSE) form a disordered region. Residues 439–448 (MPTQPTAPSE) are compositionally biased toward polar residues.

Belongs to the G-protein coupled receptor 1 family.

It localises to the cell projection. The protein localises to the cilium membrane. The protein resides in the cell membrane. Its function is as follows. Key negative regulator of Shh signaling during neural tube development. Recruited to primary cilia and acts as a regulator of the PKA-dependent basal repression machinery in Shh signaling by increasing cAMP levels, leading to promote the PKA-dependent processing of gli3 into gli3r and repress the Shh signaling. In presence of shh, it is removed from primary cilia, preventing its activity and allowing activation of the Shh signaling. The polypeptide is G-protein coupled receptor 161 (gpr161) (Xenopus tropicalis (Western clawed frog)).